We begin with the raw amino-acid sequence, 495 residues long: Probable endopolygalacturonase D (495 aa).

The first 16 residues, 1-16 (MKRSALLASFLPLALG), serve as a signal peptide directing secretion. An intrachain disulfide couples cysteine 154 to cysteine 169. PbH1 repeat units lie at residues 261–283 (MYNSKIENLNILNWPVHCFEIEN), 284–322 (TEYLTISGLILNNTAGDAANSKSDGDPAAHNTDGFDIKQ), and 323–344 (SDFLTLSNSWVHNQDDCVAVTS). N-linked (GlcNAc...) asparagine glycosylation is present at asparagine 295. The Proton donor role is filled by aspartate 337. A disulfide bridge connects residues cysteine 339 and cysteine 355. Residue histidine 359 is part of the active site. Asparagine 371 carries an N-linked (GlcNAc...) asparagine glycan. PbH1 repeat units lie at residues 374 to 395 (VDGVTFSNSQVINSENGCRIKS) and 403 to 425 (VYNVKYENITLSGISDYGIDIQQ). Residues asparagine 410 and asparagine 444 are each glycosylated (N-linked (GlcNAc...) asparagine). Intrachain disulfides connect cysteine 464/cysteine 469 and cysteine 487/cysteine 494. Residues 469–492 (CSNFVFTDVDITGGSDDSCNYPSS) form a PbH1 6 repeat.

This sequence belongs to the glycosyl hydrolase 28 family.

Its subcellular location is the secreted. It catalyses the reaction (1,4-alpha-D-galacturonosyl)n+m + H2O = (1,4-alpha-D-galacturonosyl)n + (1,4-alpha-D-galacturonosyl)m.. Involved in maceration and soft-rotting of plant tissue. Hydrolyzes the 1,4-alpha glycosidic bonds of de-esterified pectate in the smooth region of the plant cell wall. The polypeptide is Probable endopolygalacturonase D (pgaD) (Aspergillus niger (strain ATCC MYA-4892 / CBS 513.88 / FGSC A1513)).